The primary structure comprises 301 residues: Glycine--tRNA ligase alpha subunit (301 aa).

This sequence belongs to the class-II aminoacyl-tRNA synthetase family. As to quaternary structure, tetramer of two alpha and two beta subunits.

The protein resides in the cytoplasm. It carries out the reaction tRNA(Gly) + glycine + ATP = glycyl-tRNA(Gly) + AMP + diphosphate. The sequence is that of Glycine--tRNA ligase alpha subunit from Nitrosospira multiformis (strain ATCC 25196 / NCIMB 11849 / C 71).